Here is a 251-residue protein sequence, read N- to C-terminus: Triosephosphate isomerase (251 aa).

Residue 9 to 11 (NWK) participates in substrate binding. Histidine 95 serves as the catalytic Electrophile. Glutamate 167 functions as the Proton acceptor in the catalytic mechanism. Substrate-binding positions include glycine 173, serine 213, and 234 to 235 (GG). Serine 213 carries the post-translational modification Phosphoserine.

This sequence belongs to the triosephosphate isomerase family. In terms of assembly, homodimer.

The protein resides in the cytoplasm. It catalyses the reaction D-glyceraldehyde 3-phosphate = dihydroxyacetone phosphate. It participates in carbohydrate biosynthesis; gluconeogenesis. Its pathway is carbohydrate degradation; glycolysis; D-glyceraldehyde 3-phosphate from glycerone phosphate: step 1/1. Its function is as follows. Involved in the gluconeogenesis. Catalyzes stereospecifically the conversion of dihydroxyacetone phosphate (DHAP) to D-glyceraldehyde-3-phosphate (G3P). This chain is Triosephosphate isomerase, found in Bacillus cereus (strain B4264).